Consider the following 308-residue polypeptide: Glutaminase (308 aa).

Substrate contacts are provided by serine 66, asparagine 117, glutamate 161, asparagine 168, tyrosine 192, tyrosine 244, and valine 262.

Belongs to the glutaminase family. As to quaternary structure, homotetramer.

It carries out the reaction L-glutamine + H2O = L-glutamate + NH4(+). The sequence is that of Glutaminase from Salmonella dublin (strain CT_02021853).